A 604-amino-acid chain; its full sequence is Probable translation initiation factor IF-2 (604 aa).

Residues 18-232 (IRTPIVCVLG…VLIGLAQRYM (215 aa)) enclose the tr-type G domain. The tract at residues 27-34 (GHVDHGKT) is G1. 27–34 (GHVDHGKT) contributes to the GTP binding site. A G2 region spans residues 52 to 56 (AITQH). A G3 region spans residues 88-91 (DTPG). Residues 88 to 92 (DTPGH) and 142 to 145 (TKLD) contribute to the GTP site. The G4 stretch occupies residues 142–145 (TKLD). Positions 210 to 212 (SAH) are G5.

Belongs to the TRAFAC class translation factor GTPase superfamily. Classic translation factor GTPase family. IF-2 subfamily.

In terms of biological role, function in general translation initiation by promoting the binding of the formylmethionine-tRNA to ribosomes. Seems to function along with eIF-2. The chain is Probable translation initiation factor IF-2 from Methanospirillum hungatei JF-1 (strain ATCC 27890 / DSM 864 / NBRC 100397 / JF-1).